The following is a 1072-amino-acid chain: MAAALLLYLPLLPGLAGAFNLDAENVIGRRGEPGSLFGFSLAMHRQLQPQEKRLLLVGAPREKAFPSQQANRTGGLYSCDITSSDTRCTRVVFDEDTDPKMESKEDQWMGVTVQSQGPGGNVVTCAHRYEKRQYVNTVQETRDIIGRCYVLSQDLTIKDDMDNGVWSFCDGRLRGHEKFGSCQQGVAATFTRDYHYIVFGAPGTYNWKGVVRAEQKNQTFYDLGIFDDGPYEVGDESRQDKNLVPVPANSYLGFSLDSGKGIVSQDEMTFVSGAPRANHSGAVVLLKKEKNQRALSLEHMFEGEGLASSFGYDVAVVDLNSDGWQDIVVGAPQYFDRSGDIGGAVYIYINQRGKWEGIKPIRLNGTADSMFGLAVENVGDINQDGYPDIAVGAPYDGFGKVYIYHGSKNGINTEPAQILDGEKTGTNFFGYSIAGNMDLDKNSYPDIAVGSLSDSVSVFRSRPVISITKSITVQPDKLDLKKKNPEDPSEIWMDVKACFQYTANPRNLNPRIKINYTFEAENERRQLGLPSRVRFKDYLSDQFTASTTLIGQNSKRCVTAKLVLQEKIKDKLRPIPIAVSVNIAGLESGSSSTRKERALPDLIPILNSNESETKITKVEFLKEGCGEDNECHSNLKLQYRFCTREGNEDRFTYLPIENGIPVLVLKDQKDIALEITVTNNPSDARNPQKDGEDAYEAKLIATFPDSLTYSAFREMRGYPEKQLTCGANQNGSQAECELGNPFKRNSNVTFYLILSTTKVNVDTTDLDINLKLETTSTQVNSTAITASAKVVLELLLSLTGVAKPSQVYFGGNIVGESAMKSEDNIGNLIEYEFRVTNLGRPLKTFGTASLDIQWPKEISNGKWLLYLMKIESKGLEKVSCQPQNEINVLHVAESHNSRRKREIAEKQLTDSKTFSLFSERKYKTLDCKVNAQCVDIRCPLKGFDSKASILLRSRLWNSTFLEEFSKMNYLDILVRASISVPAAAKNVKLTNEAAQVRVTVFPAKPVALYTGVPWWIIAVAIFAGVLMLALLVFLLWKCGFFKRSKKDHYDATYHKAEIHAQPSDKERLTSDA.

Residues 1-18 (MAAALLLYLPLLPGLAGA) form the signal peptide. The Extracellular segment spans residues 19–1010 (FNLDAENVIG…FPAKPVALYT (992 aa)). FG-GAP repeat units follow at residues 23-88 (AENV…DTRC), 94-160 (DEDT…IKDD), 170-223 (DGRL…FYDL), 238-295 (RQDK…QRAL), 296-357 (SLEH…KWEG), 358-413 (IKPI…GINT), and 414-476 (EPAQ…VQPD). An N-linked (GlcNAc...) asparagine glycan is attached at asparagine 71. 3 cysteine pairs are disulfide-bonded: cysteine 79–cysteine 88, cysteine 125–cysteine 148, and cysteine 169–cysteine 182. N-linked (GlcNAc...) asparagine glycosylation is found at asparagine 217 and asparagine 278. 4 residues coordinate Ca(2+): aspartate 318, asparagine 320, aspartate 322, and aspartate 326. The N-linked (GlcNAc...) asparagine glycan is linked to asparagine 364. Ca(2+) contacts are provided by aspartate 380, asparagine 382, aspartate 384, tyrosine 386, aspartate 388, aspartate 438, aspartate 440, asparagine 442, tyrosine 444, and aspartate 446. A disulfide bridge connects residues cysteine 498 and cysteine 557. 2 N-linked (GlcNAc...) asparagine glycosylation sites follow: asparagine 515 and asparagine 609. 2 disulfide bridges follow: cysteine 625/cysteine 631 and cysteine 725/cysteine 736. N-linked (GlcNAc...) asparagine glycosylation is found at asparagine 730, asparagine 747, and asparagine 780. Intrachain disulfides connect cysteine 880/cysteine 927 and cysteine 933/cysteine 938. Residue asparagine 957 is glycosylated (N-linked (GlcNAc...) asparagine). Residues 1011-1036 (GVPWWIIAVAIFAGVLMLALLVFLLW) form a helical membrane-spanning segment. Over 1037–1072 (KCGFFKRSKKDHYDATYHKAEIHAQPSDKERLTSDA) the chain is Cytoplasmic. Residue cysteine 1038 is the site of S-palmitoyl cysteine; by DHHC3 attachment. The short motif at 1039–1043 (GFFKR) is the GFFKR motif element. A Phosphoserine; by CaMK2 modification is found at serine 1070.

The protein belongs to the integrin alpha chain family. In terms of assembly, heterodimer of an alpha and a beta subunit. The alpha subunit is composed of a heavy and a light chain linked by a disulfide bond. Alpha-6 associates with either beta-1 (ITGB1) or beta-4 (ITGB4) to form ITGA6:ITGB1 and ITGA6:ITGB4, respectively. In terms of processing, phosphorylated in vivo.

It localises to the cell membrane. Its function is as follows. Integrin alpha-6/beta-1 (ITGA6:ITGB1) is a receptor for laminin on platelets. Integrin alpha-6/beta-1 (ITGA6:ITGB1) is present in oocytes and is involved in sperm-egg fusion. Integrin alpha-6/beta-4 (ITGA6:ITGB4) is a receptor for laminin in epithelial cells and it plays a critical structural role in the hemidesmosome. The chain is Integrin alpha-6 (ITGA6) from Gallus gallus (Chicken).